The following is a 431-amino-acid chain: MASEGSPDCCSSEPYAGASSCTTASFCPTSTTYLPSTCATSRCQTPSFLCRAHLPAGCLSPCYLTGGCNSPCLVGNCAWCEEGTFNSNEKETMQFLNDRLASYLERVRSLEENNAELECRIREQCEPDATPVCPDYQRYFDTIEELQQKILCTKAENSRLAVQVDNCKLAADDFRSKYESELSLRQLVENDISGLRGILGELTLCKSDLEAHVESLKDDLLCLKKDHEEEVNLLREQLGDRLNVELDTAPTVDLNKVLDEMRCQYERVLANNRRDAEEWFAAQTEELNQQQMSSAEQLQGCQTEMLELKRTANTLEIELQAQQTLTESLECTVAETEAQYSTQLAQMQCLIDSVEHQLAEIRCDLERQNQEYKVLLDTKARLECEINTYRGLLEKEDSRLPCNPGSTASISNSACEPCSAYVICTVENCCA.

The interval 1–89 is head; it reads MASEGSPDCC…CEEGTFNSNE (89 aa). The region spanning 89-400 is the IF rod domain; that stretch reads EKETMQFLND…GLLEKEDSRL (312 aa). Residues 90–124 are coil 1A; sequence KETMQFLNDRLASYLERVRSLEENNAELECRIREQ. The segment at 125-135 is linker 1; the sequence is CEPDATPVCPD. Positions 136–236 are coil 1B; that stretch reads YQRYFDTIEE…HEEEVNLLRE (101 aa). The linker 12 stretch occupies residues 237–252; the sequence is QLGDRLNVELDTAPTV. Residues 253–396 are coil 2; it reads DLNKVLDEMR…NTYRGLLEKE (144 aa). A tail region spans residues 397–431; that stretch reads DSRLPCNPGSTASISNSACEPCSAYVICTVENCCA.

Belongs to the intermediate filament family. In terms of assembly, heterotetramer of two type I and two type II keratins.

Functionally, may play a role in late hair differentiation. The sequence is that of Keratin, type I cytoskeletal 40 (Krt40) from Rattus norvegicus (Rat).